Consider the following 147-residue polypeptide: Lysozyme C (147 aa).

Residues 1-18 (MRSLLILVLCFLPLAALG) form the signal peptide. In terms of domain architecture, C-type lysozyme spans 19–147 (KVYGRCELAA…VHAWIRGCRL (129 aa)). 4 cysteine pairs are disulfide-bonded: Cys-24/Cys-145, Cys-48/Cys-133, Cys-82/Cys-98, and Cys-94/Cys-112.

The protein belongs to the glycosyl hydrolase 22 family. In terms of assembly, monomer.

Its subcellular location is the secreted. It catalyses the reaction Hydrolysis of (1-&gt;4)-beta-linkages between N-acetylmuramic acid and N-acetyl-D-glucosamine residues in a peptidoglycan and between N-acetyl-D-glucosamine residues in chitodextrins.. In terms of biological role, lysozymes have primarily a bacteriolytic function; those in tissues and body fluids are associated with the monocyte-macrophage system and enhance the activity of immunoagents. The protein is Lysozyme C (LYZ) of Meleagris gallopavo (Wild turkey).